A 385-amino-acid chain; its full sequence is MNQEDNTGGGGIFGLFKWTKDALFGTDISPSMKYKDQEERRDRSRYAQDDTNFSMKFGNDSNRRSTNLSRSNSWSGLDSTLHRKYELLPEYNENGFNSIVNGDHHSKERIRSLRSPAPIVPREPLRNEPTDTFGHRLHTKRRTINELSNSQIPFIPPQEDDPLLSKLFNKDGVNEVRRSPYKLSVKDIPGKFPSPLTKRDEIDNYYVRDEDACHKNREYKKAYFDLFAQMDLNSRDLEDLCEDVREQREQFHRNEQTYKQAYEEMRAELVNELKKSKTLFENYYSLGQKYKSLKKVLDQTISHEAELATSRERLYQEEDLKNFEIQTLKQRLSDLELKYTNLQIEKDMQRDNYESEIHDLLLQLSLRNNERKDTSAGSNIFSTGQ.

Serine 29 is subject to Phosphoserine. Residues tyrosine 34–glutamine 48 are compositionally biased toward basic and acidic residues. The segment at tyrosine 34–glycine 76 is disordered. The span at arginine 64–serine 75 shows a compositional bias: low complexity. Phosphoserine is present on residues serine 73 and serine 115. Residues glutamine 229–serine 355 adopt a coiled-coil conformation.

This sequence belongs to the BBP1 family. As to quaternary structure, homodimer. Interacts with KAR1, MPS2 and SPC29.

Its subcellular location is the cytoplasm. It localises to the cytoskeleton. The protein localises to the microtubule organizing center. It is found in the spindle pole body. In terms of biological role, component of the spindle pole body (SPB) required for insertion of the nascent SPB into the nuclear envelope and for the proper execution of spindle pole body (SPB) duplication. Connects the central plaque of the SPB with the half-bridge. Required for proper localization of CDC5 at the SPB and for proper M-phase progression. The chain is Spindle pole component BBP1 (BBP1) from Saccharomyces cerevisiae (strain ATCC 204508 / S288c) (Baker's yeast).